A 114-amino-acid polypeptide reads, in one-letter code: Aspartate 1-decarboxylase (114 aa).

S25 (schiff-base intermediate with substrate; via pyruvic acid) is an active-site residue. Position 25 is a pyruvic acid (Ser) (S25). T57 is a binding site for substrate. The active-site Proton donor is Y58. 73–75 (GAA) provides a ligand contact to substrate.

This sequence belongs to the PanD family. In terms of assembly, heterooctamer of four alpha and four beta subunits. It depends on pyruvate as a cofactor. Is synthesized initially as an inactive proenzyme, which is activated by self-cleavage at a specific serine bond to produce a beta-subunit with a hydroxyl group at its C-terminus and an alpha-subunit with a pyruvoyl group at its N-terminus.

The protein localises to the cytoplasm. It carries out the reaction L-aspartate + H(+) = beta-alanine + CO2. The protein operates within cofactor biosynthesis; (R)-pantothenate biosynthesis; beta-alanine from L-aspartate: step 1/1. Functionally, catalyzes the pyruvoyl-dependent decarboxylation of aspartate to produce beta-alanine. In Thermotoga petrophila (strain ATCC BAA-488 / DSM 13995 / JCM 10881 / RKU-1), this protein is Aspartate 1-decarboxylase.